Here is a 266-residue protein sequence, read N- to C-terminus: tRNA pseudouridine synthase A (266 aa).

Asp-52 serves as the catalytic Nucleophile. Residue Tyr-113 coordinates substrate.

It belongs to the tRNA pseudouridine synthase TruA family. In terms of assembly, homodimer.

The catalysed reaction is uridine(38/39/40) in tRNA = pseudouridine(38/39/40) in tRNA. In terms of biological role, formation of pseudouridine at positions 38, 39 and 40 in the anticodon stem and loop of transfer RNAs. This is tRNA pseudouridine synthase A from Agrobacterium fabrum (strain C58 / ATCC 33970) (Agrobacterium tumefaciens (strain C58)).